Consider the following 286-residue polypeptide: 4-diphosphocytidyl-2-C-methyl-D-erythritol kinase (286 aa).

Residue K13 is part of the active site. 96–106 (PMGGGIGGGSS) lines the ATP pocket. D138 is an active-site residue.

The protein belongs to the GHMP kinase family. IspE subfamily.

The catalysed reaction is 4-CDP-2-C-methyl-D-erythritol + ATP = 4-CDP-2-C-methyl-D-erythritol 2-phosphate + ADP + H(+). It participates in isoprenoid biosynthesis; isopentenyl diphosphate biosynthesis via DXP pathway; isopentenyl diphosphate from 1-deoxy-D-xylulose 5-phosphate: step 3/6. Functionally, catalyzes the phosphorylation of the position 2 hydroxy group of 4-diphosphocytidyl-2C-methyl-D-erythritol. The sequence is that of 4-diphosphocytidyl-2-C-methyl-D-erythritol kinase from Pseudoalteromonas atlantica (strain T6c / ATCC BAA-1087).